We begin with the raw amino-acid sequence, 340 residues long: Uroporphyrinogen decarboxylase (340 aa).

Residues 21–25, Asp-71, Tyr-148, Ser-203, and His-316 each bind substrate; that span reads RQAGR.

It belongs to the uroporphyrinogen decarboxylase family. As to quaternary structure, homodimer.

Its subcellular location is the cytoplasm. The catalysed reaction is uroporphyrinogen III + 4 H(+) = coproporphyrinogen III + 4 CO2. Its pathway is porphyrin-containing compound metabolism; protoporphyrin-IX biosynthesis; coproporphyrinogen-III from 5-aminolevulinate: step 4/4. Its function is as follows. Catalyzes the decarboxylation of four acetate groups of uroporphyrinogen-III to yield coproporphyrinogen-III. This Campylobacter lari (strain RM2100 / D67 / ATCC BAA-1060) protein is Uroporphyrinogen decarboxylase.